The sequence spans 122 residues: FMN-binding protein (122 aa).

In terms of assembly, monomer and homodimer. It depends on FMN as a cofactor.

It is found in the cytoplasm. Its function is as follows. Functions as a redox protein with a potential of -325 mV. The sequence is that of FMN-binding protein from Nitratidesulfovibrio vulgaris (strain DSM 19637 / Miyazaki F) (Desulfovibrio vulgaris).